A 465-amino-acid polypeptide reads, in one-letter code: MNNKLEQFKKDVKNKRVAVMGIGVSNIPLIKYLVSFGVDVTAFDKSTEEKLTDAFNELKGLPVKYSLGPDYLSRLNGFDMIFRTPGMRPDLPELVEAVANGAELTSEMEVFLKLCPAQVFAVTGSDGKTTTTTLIYKTLSEEGFKCWLGGNIGTPLLSKIDDVAETDKVILELSSFQLMTIKDCPSVAVITNISPNHLDVHKSLQEYIDAKKNIFINQNENDKLVLNFDNEITKSFNYEARGEYVYFSRLNNINEGVVYQNGRIIVKKENSITEIIEGDKIKIPGVHNIENYMAATAATIDYVKPETIARIASSFNGVEHRIELVRELNGVKFYNSSIDSSPSRTIAALKTFKDKVILIAGGKDKGIPYDSMGEIITEKVKCLLLIGATASRIEEAYKNYLQQRDLENDIKIIHCDTYQEVVQKAHAEAEQGDCIILSPASTSFDMFKNFEHRGNVFKELVNNLK.

ATP is bound at residue 124-130 (GSDGKTT).

This sequence belongs to the MurCDEF family.

Its subcellular location is the cytoplasm. The enzyme catalyses UDP-N-acetyl-alpha-D-muramoyl-L-alanine + D-glutamate + ATP = UDP-N-acetyl-alpha-D-muramoyl-L-alanyl-D-glutamate + ADP + phosphate + H(+). It functions in the pathway cell wall biogenesis; peptidoglycan biosynthesis. In terms of biological role, cell wall formation. Catalyzes the addition of glutamate to the nucleotide precursor UDP-N-acetylmuramoyl-L-alanine (UMA). This Ruminiclostridium cellulolyticum (strain ATCC 35319 / DSM 5812 / JCM 6584 / H10) (Clostridium cellulolyticum) protein is UDP-N-acetylmuramoylalanine--D-glutamate ligase.